The primary structure comprises 512 residues: Kynurenine 3-monooxygenase (512 aa).

The protein belongs to the aromatic-ring hydroxylase family. KMO subfamily. Requires FAD as cofactor.

It localises to the mitochondrion outer membrane. It carries out the reaction L-kynurenine + NADPH + O2 + H(+) = 3-hydroxy-L-kynurenine + NADP(+) + H2O. Its pathway is cofactor biosynthesis; NAD(+) biosynthesis; quinolinate from L-kynurenine: step 1/3. Its function is as follows. Catalyzes the hydroxylation of L-kynurenine (L-Kyn) to form 3-hydroxy-L-kynurenine (L-3OHKyn). Required for synthesis of quinolinic acid. The chain is Kynurenine 3-monooxygenase (bna4) from Neosartorya fischeri (strain ATCC 1020 / DSM 3700 / CBS 544.65 / FGSC A1164 / JCM 1740 / NRRL 181 / WB 181) (Aspergillus fischerianus).